The following is a 764-amino-acid chain: MTTAHILGFPRIGAQRELKFALERYWRDGASADAERALVDTGRALRAEHWRIERDAGLDCVTVGDFAWYDHVLTTLAHVGGLPRRFGFDAHALTLADYFAAARGNAAQPAMEMTKWFDTNYHYLVPEYSPATTFGPGVEWLFDEVREARALGHRAKAALVGPLTLLWLGKARDGLVERLALLPRLVPAYRALLARLREAGVDWVQIDEPIFSLDLPDAWRDAARPTYEALAPGAPKLLVATYFDDASEHAALLKALPVAGLHIDLVRADAQLDAFVADYPADKVLSCGIVDGRNVWRNDLDRSLARLAPVRDALGERLWVATSCSLLHVPVDLAHEPRLDEELKTWLAFAAQKTREVAALRDALVKGRAAVAAEFDDAAAAAAARRTSARIHNPLVKRRVAALTDADARRASTYSVRAAAQRARFGLPLLPTTTIGSFPQTPEIRRARAAFKQGVLDHLGYLEAMREQVRIAIDKQLAYGLDVLVHGEAERNDMVEYFGELLWGFAITSNGWVQSYGSRCVKPPLVYGDVYLPEPMTVGWASYAQSLSAKPVKGMLTGPVTMLQWSFVRDDQPRATTALQIALALRQETLDLEKAGIGMIQIDEPALREGLPLKARERAAYLDWAVRAFGIAASGVADDTQIHTHMCYSEFGDILPSIAALDADVISIETTRSNMELLDAFETFDYPNEIGPGVYDIHSPRVPDADEIERLILLALERIPAQRLWVNPDCGLKTREWRQVDAALAAMVDAAKRVRQKVEEAVPA.

Residues 16 to 19 (RELK) and Lys-115 contribute to the 5-methyltetrahydropteroyltri-L-glutamate site. Residues 435 to 437 (IGS) and Glu-488 contribute to the L-homocysteine site. L-methionine contacts are provided by residues 435-437 (IGS) and Glu-488. Residues 519 to 520 (RC) and Trp-565 each bind 5-methyltetrahydropteroyltri-L-glutamate. Asp-603 contacts L-homocysteine. Asp-603 contacts L-methionine. Glu-609 provides a ligand contact to 5-methyltetrahydropteroyltri-L-glutamate. 3 residues coordinate Zn(2+): His-645, Cys-647, and Glu-669. His-698 (proton donor) is an active-site residue. Zn(2+) is bound at residue Cys-730.

This sequence belongs to the vitamin-B12 independent methionine synthase family. Requires Zn(2+) as cofactor.

The enzyme catalyses 5-methyltetrahydropteroyltri-L-glutamate + L-homocysteine = tetrahydropteroyltri-L-glutamate + L-methionine. It functions in the pathway amino-acid biosynthesis; L-methionine biosynthesis via de novo pathway; L-methionine from L-homocysteine (MetE route): step 1/1. Its function is as follows. Catalyzes the transfer of a methyl group from 5-methyltetrahydrofolate to homocysteine resulting in methionine formation. The sequence is that of 5-methyltetrahydropteroyltriglutamate--homocysteine methyltransferase from Burkholderia pseudomallei (strain 668).